The primary structure comprises 205 residues: COP9 signalosome complex subunit 7 (205 aa).

Residues 1 to 135 (MEEKISQAID…QTLHVSWALE (135 aa)) form the PCI domain. Ser183 carries the phosphoserine modification.

The protein belongs to the CSN7/EIF3M family. CSN7 subfamily. As to quaternary structure, component of the COP9 signalosome (CSN) complex.

Its function is as follows. Component of the COP9 signalosome (CSN) complex that acts as an regulator of the ubiquitin (Ubl) conjugation pathway by mediating the deneddylation of the cullin subunit of SCF-type E3 ubiquitin-protein ligase complexes. The chain is COP9 signalosome complex subunit 7 (csn71) from Schizosaccharomyces pombe (strain 972 / ATCC 24843) (Fission yeast).